We begin with the raw amino-acid sequence, 233 residues long: MAKLTKRARLIREKVEVTKNYDINEAVALLKELATAKFVESVDVAVNLGVDPRKSDQNVRGATVLPHGTGRDVRVAVFTQGANAEAATAAGAELVGMDELAAQVKAGEMNFDVVIASPDAMRVVGQLGQILGPRGLMPNPKTGTVTPNVAEAVKNAKAGQVRYRTDKNGIIHTTIGKVDFEAAQIKENLEALIGALVKAKPAAAKGVFLKKVSISTTMGAGVAVDQSTLDDAK.

It belongs to the universal ribosomal protein uL1 family. As to quaternary structure, part of the 50S ribosomal subunit.

Its function is as follows. Binds directly to 23S rRNA. The L1 stalk is quite mobile in the ribosome, and is involved in E site tRNA release. In terms of biological role, protein L1 is also a translational repressor protein, it controls the translation of the L11 operon by binding to its mRNA. This chain is Large ribosomal subunit protein uL1, found in Shewanella sediminis (strain HAW-EB3).